Reading from the N-terminus, the 166-residue chain is NAD(P)H-quinone oxidoreductase subunit I, chloroplastic (166 aa).

4Fe-4S ferredoxin-type domains are found at residues 55–84 (GRIHFEFDKCIACEVCVRVCPIDLPVVDWK) and 95–124 (LNYSIDFGICIFCGNCVEYCPTNCLSMTEE). [4Fe-4S] cluster contacts are provided by C64, C67, C70, C74, C104, C107, C110, and C114.

It belongs to the complex I 23 kDa subunit family. In terms of assembly, NDH is composed of at least 16 different subunits, 5 of which are encoded in the nucleus. The cofactor is [4Fe-4S] cluster.

It is found in the plastid. Its subcellular location is the chloroplast thylakoid membrane. It catalyses the reaction a plastoquinone + NADH + (n+1) H(+)(in) = a plastoquinol + NAD(+) + n H(+)(out). The catalysed reaction is a plastoquinone + NADPH + (n+1) H(+)(in) = a plastoquinol + NADP(+) + n H(+)(out). In terms of biological role, NDH shuttles electrons from NAD(P)H:plastoquinone, via FMN and iron-sulfur (Fe-S) centers, to quinones in the photosynthetic chain and possibly in a chloroplast respiratory chain. The immediate electron acceptor for the enzyme in this species is believed to be plastoquinone. Couples the redox reaction to proton translocation, and thus conserves the redox energy in a proton gradient. The sequence is that of NAD(P)H-quinone oxidoreductase subunit I, chloroplastic from Laphamia lindheimeri (Lindheimer's rockdaisy).